The chain runs to 204 residues: Thymidylate kinase (204 aa).

11–18 (GLDKSGKT) lines the ATP pocket.

This sequence belongs to the thymidylate kinase family.

It carries out the reaction dTMP + ATP = dTDP + ADP. It participates in pyrimidine metabolism; dTTP biosynthesis. The protein is Thymidylate kinase (TMK) of Camelus.